We begin with the raw amino-acid sequence, 538 residues long: MGASTFSQSFAEGYAAWALMLPALVGCALLIYRAFFAIRYPANLPLAGEPDGKRTFSWRTRWRYYIDCEALYKETYDNYTKHGKTVLLPGLGFRHDIVLPQSAMRDIMARPEKELSHADAVLELVQLKYSLGHEKYKADPWPCMLVKSDINSKLEAVCDGMNEELKYAFDKYVGCDTESWKEVDLLETIRMIIMAAASRFTVGFPLCRSEAYLRACWKVNDGIMMNGGLTGATPRLLRPIVGPLVTMKLRQSIEQVKKHVEPIYRQRVQALSQQNSAEKPASDETQDLFQQMLRYAQRERPGELHDLPSMCRRLCFANFAAVHQTTLLVTNMVLNIVSSDPQHNTISVLRDEVKDVIGPDSNAKWTKYKVAQMIKSDSVARETMRLYSNTNRGVFRKVLVEGIKTEDGIELPKGAYVSFLGRPLQCDPETFEDPFEYNPFRFSRIREQAPRDTKGRSSASHLSFVSTSPEHLPFGHGGHSCPGRFLVDFEVKMIVAYLLMNYDVEFPAEYKGQRPANRWMAEALMPPSGARIRIKRRS.

The chain crosses the membrane as a helical span at residues 18–38 (ALMLPALVGCALLIYRAFFAI). Cys481 serves as a coordination point for heme.

Belongs to the cytochrome P450 family. Heme serves as cofactor.

The protein resides in the membrane. It functions in the pathway secondary metabolite biosynthesis; terpenoid biosynthesis. In terms of biological role, cytochrome P450 monooxygenase; part of the gene cluster that mediates the biosynthesis of the sesquiterpenoid aspterric acid (AA), an inhibitor of dihydroxy-acid dehydratase (DHAD) effective as an herbicide. AstC catalyzes the third and last step within the pathway and converts the alpha-epoxy carboxylate intermediate produced by the cytochrome P450 monooxygenase astC from (-)daucane into the tricyclic aspterric acid. The chain is Cytochrome P450 monooxygenase astC from Aspergillus terreus (strain NIH 2624 / FGSC A1156).